We begin with the raw amino-acid sequence, 318 residues long: Ribosomal RNA small subunit methyltransferase H (318 aa).

Residues 38–40 (AGH), Asp57, Leu91, Asp105, and Gln112 contribute to the S-adenosyl-L-methionine site.

The protein belongs to the methyltransferase superfamily. RsmH family.

It is found in the cytoplasm. It catalyses the reaction cytidine(1402) in 16S rRNA + S-adenosyl-L-methionine = N(4)-methylcytidine(1402) in 16S rRNA + S-adenosyl-L-homocysteine + H(+). Its function is as follows. Specifically methylates the N4 position of cytidine in position 1402 (C1402) of 16S rRNA. The chain is Ribosomal RNA small subunit methyltransferase H from Clavibacter michiganensis subsp. michiganensis (strain NCPPB 382).